Consider the following 672-residue polypeptide: Glycine--tRNA ligase beta subunit (672 aa).

This sequence belongs to the class-II aminoacyl-tRNA synthetase family. As to quaternary structure, tetramer of two alpha and two beta subunits.

The protein localises to the cytoplasm. The catalysed reaction is tRNA(Gly) + glycine + ATP = glycyl-tRNA(Gly) + AMP + diphosphate. This Thermotoga petrophila (strain ATCC BAA-488 / DSM 13995 / JCM 10881 / RKU-1) protein is Glycine--tRNA ligase beta subunit.